The primary structure comprises 156 residues: MGRFIFVRFGLLVVFLSLSGTGADFDCPPDWSAYDQHCYKAFDEPKRSGDAEKFCTQQANGGHLVSIESVEEAEFVAQLISENIKTSADYVWIGLWNQRKAPYCVSKWTDGSSVIYKNVIERFIKNCFGLEKETNYRTWFNLSCGDDYPFVCKSPA.

The first 23 residues, 1–23 (MGRFIFVRFGLLVVFLSLSGTGA), serve as a signal peptide directing secretion. 3 disulfides stabilise this stretch: Cys27–Cys38, Cys55–Cys152, and Cys127–Cys144. The region spanning 34–153 (YDQHCYKAFD…CGDDYPFVCK (120 aa)) is the C-type lectin domain. A glycan (N-linked (GlcNAc...) asparagine) is linked at Asn141.

It belongs to the snaclec family. In terms of assembly, heterodimer; disulfide-linked. In terms of tissue distribution, expressed by the venom gland.

It is found in the secreted. Interferes with one step of hemostasis (modulation of platelet aggregation, or coagulation cascade, for example). This is Snaclec A15 from Macrovipera lebetinus (Levantine viper).